Here is a 188-residue protein sequence, read N- to C-terminus: Gamma-glutamylcyclotransferase (188 aa).

19 to 22 (YFAY) serves as a coordination point for substrate. Glu-98 (proton acceptor) is an active-site residue. Ser-173 is subject to Phosphoserine.

The protein belongs to the gamma-glutamylcyclotransferase family. In terms of assembly, homodimer.

It catalyses the reaction an alpha-(gamma-L-glutamyl)-L-amino acid = 5-oxo-L-proline + an L-alpha-amino acid. Functionally, catalyzes the formation of 5-oxoproline from gamma-glutamyl dipeptides and may play a significant role in glutathione homeostasis. Induces release of cytochrome c from mitochondria with resultant induction of apoptosis. The polypeptide is Gamma-glutamylcyclotransferase (GGCT) (Bos taurus (Bovine)).